A 166-amino-acid chain; its full sequence is MAIKLEDKKAIVAEVNEAAKAGLSAVVADARGVTVGAMTGLRKEAREAGVYVRVVRNTLLKRAVADTEFSVLNDVFTGPTLIAFSNEHPGAAARLFKEFAKGQDKFEIKAAAFEGKFLAANQIDVLATLPTRNEAISQLMSVIQGATSKLARTLAAVRDQKEAAAA.

Belongs to the universal ribosomal protein uL10 family. As to quaternary structure, part of the ribosomal stalk of the 50S ribosomal subunit. The N-terminus interacts with L11 and the large rRNA to form the base of the stalk. The C-terminus forms an elongated spine to which L12 dimers bind in a sequential fashion forming a multimeric L10(L12)X complex.

In terms of biological role, forms part of the ribosomal stalk, playing a central role in the interaction of the ribosome with GTP-bound translation factors. The chain is Large ribosomal subunit protein uL10 from Pseudomonas syringae pv. tomato (strain ATCC BAA-871 / DC3000).